Consider the following 82-residue polypeptide: Small ribosomal subunit protein bS18 (82 aa).

Residues 1–20 (MSETSSAPVRRPFHRRRKTC) are disordered.

Belongs to the bacterial ribosomal protein bS18 family. As to quaternary structure, part of the 30S ribosomal subunit. Forms a tight heterodimer with protein bS6.

In terms of biological role, binds as a heterodimer with protein bS6 to the central domain of the 16S rRNA, where it helps stabilize the platform of the 30S subunit. This is Small ribosomal subunit protein bS18 from Rhizobium johnstonii (strain DSM 114642 / LMG 32736 / 3841) (Rhizobium leguminosarum bv. viciae).